The chain runs to 114 residues: Ribonuclease P protein component (114 aa).

It belongs to the RnpA family. As to quaternary structure, consists of a catalytic RNA component (M1 or rnpB) and a protein subunit.

It catalyses the reaction Endonucleolytic cleavage of RNA, removing 5'-extranucleotides from tRNA precursor.. Functionally, RNaseP catalyzes the removal of the 5'-leader sequence from pre-tRNA to produce the mature 5'-terminus. It can also cleave other RNA substrates such as 4.5S RNA. The protein component plays an auxiliary but essential role in vivo by binding to the 5'-leader sequence and broadening the substrate specificity of the ribozyme. This Legionella pneumophila (strain Paris) protein is Ribonuclease P protein component.